The primary structure comprises 161 residues: UPF0262 protein Meso_0189 (161 aa).

It belongs to the UPF0262 family.

The protein is UPF0262 protein Meso_0189 of Chelativorans sp. (strain BNC1).